A 394-amino-acid polypeptide reads, in one-letter code: Probable cytosolic iron-sulfur protein assembly protein 1 (394 aa).

WD repeat units lie at residues 10–49 (AHND…NFPL), 56–108 (AHKR…EQDS), 144–184 (GHEN…EEFE), 191–230 (DHQH…DDWS), 237–284 (GHGG…TEQI), 313–352 (IHKY…KWEI), and 359–394 (AHGV…IWEP).

This sequence belongs to the WD repeat CIA1 family. Interacts with NAR1.

It localises to the cytoplasm. It is found in the nucleus. Functionally, essential component of the cytosolic iron-sulfur (Fe/S) protein assembly machinery. Required for the maturation of extramitochondrial Fe/S proteins. In Debaryomyces hansenii (strain ATCC 36239 / CBS 767 / BCRC 21394 / JCM 1990 / NBRC 0083 / IGC 2968) (Yeast), this protein is Probable cytosolic iron-sulfur protein assembly protein 1.